A 1433-amino-acid polypeptide reads, in one-letter code: Probable serine/threonine-protein kinase DDB_G0277989 (1433 aa).

ATP contacts are provided by residues 1-4 (MNEI) and Lys-41. The region spanning 1 to 272 (MNEIIVGEYK…EFDDFTHPLS (272 aa)) is the Protein kinase 1 domain. The active-site Proton acceptor is Asp-151. Composition is skewed to low complexity over residues 332-362 (NNNN…NNNN) and 533-550 (TATT…TTTA). 2 disordered regions span residues 332–366 (NNNN…SDGP) and 521–550 (PSSE…TTTA). A Protein kinase 2 domain is found at 1177–1433 (IYDKRYYIQK…QPHVCKSFKK (257 aa)).

This sequence belongs to the protein kinase superfamily. Ser/Thr protein kinase family.

The catalysed reaction is L-seryl-[protein] + ATP = O-phospho-L-seryl-[protein] + ADP + H(+). It catalyses the reaction L-threonyl-[protein] + ATP = O-phospho-L-threonyl-[protein] + ADP + H(+). This is Probable serine/threonine-protein kinase DDB_G0277989 from Dictyostelium discoideum (Social amoeba).